Consider the following 303-residue polypeptide: Protoheme IX farnesyltransferase (303 aa).

Transmembrane regions (helical) follow at residues 25–45 (MGLV…AIVM), 54–74 (IPQI…ACAL), 118–138 (CLFL…VGYV), 166–186 (IGWV…FLVV), 230–250 (LVLL…FVVI), and 280–300 (FVYS…VSLI).

Belongs to the UbiA prenyltransferase family. Protoheme IX farnesyltransferase subfamily. Interacts with CtaA.

The protein localises to the cell membrane. It carries out the reaction heme b + (2E,6E)-farnesyl diphosphate + H2O = Fe(II)-heme o + diphosphate. It functions in the pathway porphyrin-containing compound metabolism; heme O biosynthesis; heme O from protoheme: step 1/1. Functionally, converts heme B (protoheme IX) to heme O by substitution of the vinyl group on carbon 2 of heme B porphyrin ring with a hydroxyethyl farnesyl side group. The protein is Protoheme IX farnesyltransferase of Staphylococcus epidermidis (strain ATCC 12228 / FDA PCI 1200).